Consider the following 72-residue polypeptide: Sperm protein associated with the nucleus on the X chromosome N1 (72 aa).

The segment at 1–44 is disordered; that stretch reads MEQPTSSINGEKRKSPCESNNENDEMQETPNRDLAPEPSLKKMK.

It belongs to the SPAN-X family.

This chain is Sperm protein associated with the nucleus on the X chromosome N1 (SPANXN1), found in Homo sapiens (Human).